The sequence spans 84 residues: Putative regulatory protein Dde_2720 (84 aa).

Belongs to the RemA family.

This is Putative regulatory protein Dde_2720 from Oleidesulfovibrio alaskensis (strain ATCC BAA-1058 / DSM 17464 / G20) (Desulfovibrio alaskensis).